The primary structure comprises 428 residues: Glutamate-1-semialdehyde 2,1-aminomutase (428 aa).

Lys267 is subject to N6-(pyridoxal phosphate)lysine.

It belongs to the class-III pyridoxal-phosphate-dependent aminotransferase family. HemL subfamily. As to quaternary structure, homodimer. The cofactor is pyridoxal 5'-phosphate.

It is found in the cytoplasm. The catalysed reaction is (S)-4-amino-5-oxopentanoate = 5-aminolevulinate. It functions in the pathway porphyrin-containing compound metabolism; protoporphyrin-IX biosynthesis; 5-aminolevulinate from L-glutamyl-tRNA(Glu): step 2/2. The protein is Glutamate-1-semialdehyde 2,1-aminomutase of Trichlorobacter lovleyi (strain ATCC BAA-1151 / DSM 17278 / SZ) (Geobacter lovleyi).